A 520-amino-acid chain; its full sequence is Eukaryotic translation initiation factor 3 subunit L (520 aa).

One can recognise a PCI domain in the interval 278–478; that stretch reads FATYYYVGIC…ELDIALENDL (201 aa).

The protein belongs to the eIF-3 subunit L family. Component of the eukaryotic translation initiation factor 3 (eIF-3) complex.

It localises to the cytoplasm. In terms of biological role, component of the eukaryotic translation initiation factor 3 (eIF-3) complex, which is involved in protein synthesis of a specialized repertoire of mRNAs and, together with other initiation factors, stimulates binding of mRNA and methionyl-tRNAi to the 40S ribosome. The eIF-3 complex specifically targets and initiates translation of a subset of mRNAs involved in cell proliferation. The sequence is that of Eukaryotic translation initiation factor 3 subunit L from Yarrowia lipolytica (strain CLIB 122 / E 150) (Yeast).